The chain runs to 366 residues: Chorismate synthase (366 aa).

Positions 48 and 54 each coordinate NADP(+). FMN contacts are provided by residues 125–127, 238–239, G278, 293–297, and R319; these read RSS, NA, and KPTSS.

It belongs to the chorismate synthase family. In terms of assembly, homotetramer. It depends on FMNH2 as a cofactor.

The enzyme catalyses 5-O-(1-carboxyvinyl)-3-phosphoshikimate = chorismate + phosphate. Its pathway is metabolic intermediate biosynthesis; chorismate biosynthesis; chorismate from D-erythrose 4-phosphate and phosphoenolpyruvate: step 7/7. In terms of biological role, catalyzes the anti-1,4-elimination of the C-3 phosphate and the C-6 proR hydrogen from 5-enolpyruvylshikimate-3-phosphate (EPSP) to yield chorismate, which is the branch point compound that serves as the starting substrate for the three terminal pathways of aromatic amino acid biosynthesis. This reaction introduces a second double bond into the aromatic ring system. The chain is Chorismate synthase from Neisseria meningitidis serogroup A / serotype 4A (strain DSM 15465 / Z2491).